A 626-amino-acid polypeptide reads, in one-letter code: Phosphoenolpyruvate carboxykinase (ATP) 2 (626 aa).

Disordered stretches follow at residues 1-23 (MASP…APVN) and 64-86 (PNLV…KHQQ). 324 to 331 (GLSGTGKT) serves as a coordination point for ATP.

It belongs to the phosphoenolpyruvate carboxykinase (ATP) family. In terms of assembly, homohexamer.

Its subcellular location is the cytoplasm. It catalyses the reaction oxaloacetate + ATP = phosphoenolpyruvate + ADP + CO2. It participates in carbohydrate biosynthesis; gluconeogenesis. The sequence is that of Phosphoenolpyruvate carboxykinase (ATP) 2 (PCK2) from Urochloa panicoides (Panic liverseed grass).